Reading from the N-terminus, the 558-residue chain is uncharacterized protein (558 aa).

Positions 396 to 420 (SSITDNDTDNDSGATESQQTDSEND) are disordered. The span at 407–416 (SGATESQQTD) shows a compositional bias: polar residues.

This sequence belongs to the chlamydial CPn_0065/CT_288/TC_0561 family.

This is an uncharacterized protein from Chlamydia muridarum (strain MoPn / Nigg).